We begin with the raw amino-acid sequence, 219 residues long: 7-carboxy-7-deazaguanine synthase (219 aa).

Residues Ile12–Gly14 and Arg27 each bind substrate. Residues Tyr18–Arg219 enclose the Radical SAM core domain. 3 residues coordinate [4Fe-4S] cluster: Cys31, Cys35, and Cys38. Residue Thr40 coordinates Mg(2+). Residue Thr92 participates in substrate binding. S-adenosyl-L-methionine-binding positions include Gly94 and Ser136–Lys138.

This sequence belongs to the radical SAM superfamily. 7-carboxy-7-deazaguanine synthase family. In terms of assembly, homodimer. The cofactor is [4Fe-4S] cluster. S-adenosyl-L-methionine serves as cofactor. Mg(2+) is required as a cofactor.

The catalysed reaction is 6-carboxy-5,6,7,8-tetrahydropterin + H(+) = 7-carboxy-7-deazaguanine + NH4(+). It participates in purine metabolism; 7-cyano-7-deazaguanine biosynthesis. Functionally, catalyzes the complex heterocyclic radical-mediated conversion of 6-carboxy-5,6,7,8-tetrahydropterin (CPH4) to 7-carboxy-7-deazaguanine (CDG), a step common to the biosynthetic pathways of all 7-deazapurine-containing compounds. The polypeptide is 7-carboxy-7-deazaguanine synthase (Buchnera aphidicola subsp. Schizaphis graminum (strain Sg)).